The primary structure comprises 681 residues: Macrolide export ATP-binding/permease protein MacB (681 aa).

The 239-residue stretch at 6-244 (LKLAAVTRRF…FAEVGVGAAA (239 aa)) folds into the ABC transporter domain. 42 to 49 (GASGSGKS) serves as a coordination point for ATP. The segment covering 246-273 (TETAADTRSAPASGDAPPPANNDTAADP) has biased composition (low complexity). The segment at 246–298 (TETAADTRSAPASGDAPPPANNDTAADPAPAPDASPPAPAVSPKHAGWRGSRS) is disordered. The span at 274 to 285 (APAPDASPPAPA) shows a compositional bias: pro residues. Transmembrane regions (helical) follow at residues 306–326 (CLTMLGIIIGITSVVSIVAVG), 554–574 (LTLLLSLIAVISLVVGGIGVM), 611–631 (LVCLLGGTIGIALSFGLGALF), and 644–664 (AGAIVTAFVCSTLTGVIFGFM).

This sequence belongs to the ABC transporter superfamily. Macrolide exporter (TC 3.A.1.122) family. As to quaternary structure, homodimer.

It is found in the cell inner membrane. In terms of biological role, non-canonical ABC transporter that contains transmembrane domains (TMD), which form a pore in the inner membrane, and an ATP-binding domain (NBD), which is responsible for energy generation. Confers resistance against macrolides. This chain is Macrolide export ATP-binding/permease protein MacB, found in Burkholderia orbicola (strain AU 1054).